The chain runs to 64 residues: MPKIKTKKAAAKRFKKTGSGKVKHFHAFHSHLLGHKTSKRKRRLRKSAIVSKGDMKIIKKILPY.

This sequence belongs to the bacterial ribosomal protein bL35 family.

This is Large ribosomal subunit protein bL35 from Carboxydothermus hydrogenoformans (strain ATCC BAA-161 / DSM 6008 / Z-2901).